Here is a 289-residue protein sequence, read N- to C-terminus: Cytochrome bc1 complex cytochrome c subunit (289 aa).

The span at 1–11 (MKKLGFTRSSR) shows a compositional bias: basic residues. The interval 1–28 (MKKLGFTRSSRRCSQPQEREQESERSRR) is disordered. A helical membrane pass occupies residues 37-55 (GLLLLVALTVSGGLAAVLT). Cytochrome c domains are found at residues 69 to 149 (ALLR…QANG) and 170 to 248 (TDLG…RTVI). 6 residues coordinate heme c: cysteine 82, cysteine 85, histidine 86, cysteine 183, cysteine 186, and histidine 187. Residues 267-287 (GMAIWIIGMVTAIGLALWIGA) traverse the membrane as a helical segment.

The cytochrome bc1 complex is composed of a cytochrome b (QcrB), the Rieske iron-sulfur protein (QcrA) and a diheme cytochrome c (QcrC) subunit. Post-translationally, binds 2 heme c groups covalently per subunit.

The protein resides in the cell membrane. It carries out the reaction a quinol + 2 Fe(III)-[cytochrome c](out) = a quinone + 2 Fe(II)-[cytochrome c](out) + 2 H(+)(out). Its function is as follows. Cytochrome b subunit of the cytochrome bc1 complex, an essential component of the respiratory electron transport chain required for ATP synthesis. The bc1 complex catalyzes the oxidation of ubiquinol and the reduction of cytochrome c in the respiratory chain. The bc1 complex operates through a Q-cycle mechanism that couples electron transfer to generation of the proton gradient that drives ATP synthesis. In Mycobacterium leprae (strain TN), this protein is Cytochrome bc1 complex cytochrome c subunit (qcrC).